A 201-amino-acid polypeptide reads, in one-letter code: Regulator of G-protein signaling 16 (201 aa).

Residues Cys2 and Cys12 are each lipidated (S-palmitoyl cysteine). Residues 64-180 (SFDLLLNSKN…LKSPAYRDLA (117 aa)) form the RGS domain. The residue at position 167 (Tyr167) is a Phosphotyrosine; by EGFR. Tyr176 bears the Phosphotyrosine mark. The disordered stretch occupies residues 181–201 (AQASATSTSAPSGSPAEPSHT).

As to quaternary structure, interacts with GNAI1 and GNAQ. Interacts with GNAI3, GNAI3 and GNAO1. In terms of processing, palmitoylated on Cys-2 and/or Cys-12. Post-translationally, phosphorylated. Phosphorylation at Tyr-167 by EGFR enhances GTPase accelerating (GAP) activity toward GNAI1. Retinal; also predominantly expressed in the liver and pituitary.

The protein localises to the membrane. Regulates G protein-coupled receptor signaling cascades. Inhibits signal transduction by increasing the GTPase activity of G protein alpha subunits, thereby driving them into their inactive GDP-bound form. Plays an important role in the phototransduction cascade by regulating the lifetime and effective concentration of activated transducin alpha. May regulate extra and intracellular mitogenic signals. This chain is Regulator of G-protein signaling 16 (Rgs16), found in Mus musculus (Mouse).